The primary structure comprises 156 residues: Small ribosomal subunit protein uS7 (156 aa).

Belongs to the universal ribosomal protein uS7 family. In terms of assembly, part of the 30S ribosomal subunit. Contacts proteins S9 and S11.

One of the primary rRNA binding proteins, it binds directly to 16S rRNA where it nucleates assembly of the head domain of the 30S subunit. Is located at the subunit interface close to the decoding center, probably blocks exit of the E-site tRNA. The protein is Small ribosomal subunit protein uS7 of Leuconostoc mesenteroides subsp. mesenteroides (strain ATCC 8293 / DSM 20343 / BCRC 11652 / CCM 1803 / JCM 6124 / NCDO 523 / NBRC 100496 / NCIMB 8023 / NCTC 12954 / NRRL B-1118 / 37Y).